Here is a 500-residue protein sequence, read N- to C-terminus: ADP,ATP carrier protein 5 (500 aa).

11 helical membrane-spanning segments follow: residues 21 to 41, 62 to 82, 94 to 114, 149 to 169, 184 to 204, 224 to 244, 287 to 307, 328 to 348, 357 to 377, 381 to 401, and 469 to 489; these read IYNY…CILF, IAGF…VIIY, IFYY…FVIY, YIVY…LLFW, FYTL…FLMM, ITLV…CCLL, LWLL…VEAV, LYIL…NNVM, AVIS…LIVF, ILSL…VSIG, and SISP…IYAV.

This sequence belongs to the ADP/ATP translocase tlc family.

It is found in the cell membrane. Its function is as follows. Provides the rickettsial cell with host ATP in exchange for rickettsial ADP. This is an obligate exchange system. This energy acquiring activity is an important component of rickettsial parasitism. This is ADP,ATP carrier protein 5 (tlcE) from Rickettsia bellii (strain RML369-C).